Reading from the N-terminus, the 490-residue chain is Beta-1,3-glucan-binding protein 1 (490 aa).

Positions 1-19 (MYKQTVVIFLLCFFICVSC) are cleaved as a signal peptide. Residues 20–119 (YEVPPAKLEA…GEWTVTGYVD (100 aa)) form the CBM39 domain. In terms of domain architecture, GH16 spans 152–490 (PPTSQNTYPC…QVDYVRVYAL (339 aa)). Residue N372 is glycosylated (N-linked (GlcNAc...) asparagine).

This sequence belongs to the insect beta-1,3-glucan binding protein family. Monomer. Hemolymph.

The protein resides in the secreted. Functionally, plays a role in the recognition of invading microorganisms activating the phenoloxidase cascade. Binds specifically to beta-1,3-glucan. Binds the Aspergillus niger cell wall component alpha-1,3-glucan, a fungal pathogen-associated molecular pattern (PAMP) that activates the host immune response. The chain is Beta-1,3-glucan-binding protein 1 from Galleria mellonella (Greater wax moth).